The sequence spans 244 residues: 1-(5-phosphoribosyl)-5-[(5-phosphoribosylamino)methylideneamino] imidazole-4-carboxamide isomerase (244 aa).

The active-site Proton acceptor is Asp-10. Catalysis depends on Asp-132, which acts as the Proton donor.

The protein belongs to the HisA/HisF family.

It localises to the cytoplasm. It carries out the reaction 1-(5-phospho-beta-D-ribosyl)-5-[(5-phospho-beta-D-ribosylamino)methylideneamino]imidazole-4-carboxamide = 5-[(5-phospho-1-deoxy-D-ribulos-1-ylimino)methylamino]-1-(5-phospho-beta-D-ribosyl)imidazole-4-carboxamide. It functions in the pathway amino-acid biosynthesis; L-histidine biosynthesis; L-histidine from 5-phospho-alpha-D-ribose 1-diphosphate: step 4/9. In Xanthomonas campestris pv. campestris (strain 8004), this protein is 1-(5-phosphoribosyl)-5-[(5-phosphoribosylamino)methylideneamino] imidazole-4-carboxamide isomerase.